Consider the following 239-residue polypeptide: Pyridoxine 5'-phosphate synthase (239 aa).

Asparagine 7 is a 3-amino-2-oxopropyl phosphate binding site. Residue 9-10 (DH) participates in 1-deoxy-D-xylulose 5-phosphate binding. Residue arginine 18 coordinates 3-amino-2-oxopropyl phosphate. Histidine 43 functions as the Proton acceptor in the catalytic mechanism. The 1-deoxy-D-xylulose 5-phosphate site is built by arginine 45 and histidine 50. Catalysis depends on glutamate 70, which acts as the Proton acceptor. Threonine 100 contacts 1-deoxy-D-xylulose 5-phosphate. The active-site Proton donor is histidine 191. 3-amino-2-oxopropyl phosphate is bound by residues glycine 192 and 213 to 214 (GH).

This sequence belongs to the PNP synthase family. In terms of assembly, homooctamer; tetramer of dimers.

It localises to the cytoplasm. The enzyme catalyses 3-amino-2-oxopropyl phosphate + 1-deoxy-D-xylulose 5-phosphate = pyridoxine 5'-phosphate + phosphate + 2 H2O + H(+). It participates in cofactor biosynthesis; pyridoxine 5'-phosphate biosynthesis; pyridoxine 5'-phosphate from D-erythrose 4-phosphate: step 5/5. In terms of biological role, catalyzes the complicated ring closure reaction between the two acyclic compounds 1-deoxy-D-xylulose-5-phosphate (DXP) and 3-amino-2-oxopropyl phosphate (1-amino-acetone-3-phosphate or AAP) to form pyridoxine 5'-phosphate (PNP) and inorganic phosphate. This Synechococcus sp. (strain JA-2-3B'a(2-13)) (Cyanobacteria bacterium Yellowstone B-Prime) protein is Pyridoxine 5'-phosphate synthase.